The primary structure comprises 156 residues: Small ribosomal subunit protein uS7 (156 aa).

The protein belongs to the universal ribosomal protein uS7 family. In terms of assembly, part of the 30S ribosomal subunit. Contacts proteins S9 and S11.

Its function is as follows. One of the primary rRNA binding proteins, it binds directly to 16S rRNA where it nucleates assembly of the head domain of the 30S subunit. Is located at the subunit interface close to the decoding center, probably blocks exit of the E-site tRNA. This is Small ribosomal subunit protein uS7 from Cronobacter sakazakii (strain ATCC BAA-894) (Enterobacter sakazakii).